Here is a 96-residue protein sequence, read N- to C-terminus: Large ribosomal subunit protein eL21 (96 aa).

Belongs to the eukaryotic ribosomal protein eL21 family.

The chain is Large ribosomal subunit protein eL21 from Methanoregula boonei (strain DSM 21154 / JCM 14090 / 6A8).